The chain runs to 358 residues: Alpha-ketoglutarate-dependent L-arginine hydroxylase (358 aa).

Positions 1 to 21 are disordered; the sequence is MTESPTTHHGAAPPDSVATPV. The helical transmembrane segment at 117–135 threads the bilayer; it reads LSFLLMLYAGLLGDVFGWA. 156 to 158 lines the L-arginine pocket; it reads LVS. The Fe cation site is built by His-168 and Glu-170. Thr-194 lines the 2-oxoglutarate pocket. An L-arginine-binding site is contributed by 268 to 270; that stretch reads DGD. His-316 lines the Fe cation pocket. 2-oxoglutarate-binding residues include Arg-330 and Arg-334. An L-arginine-binding site is contributed by Arg-334.

It belongs to the clavaminate synthase family. Fe cation serves as cofactor.

The protein localises to the membrane. The enzyme catalyses L-arginine + 2-oxoglutarate + O2 = (2S,3S)-hydroxyarginine + succinate + CO2. Its pathway is antibiotic biosynthesis. Its function is as follows. Involved in the biosynthesis of capreomycidine, an unusual amino acid used by non-ribosomal peptide synthases (NRPS) to make the tuberactinomycin class of peptide antibiotics such as viomycin and capreomycin. Catalyzes the stereospecific hydroxylation of the C3 of (2S)-arginine to generate (3S)-hydroxy-(2S)-arginine. Usually clavaminic acid synthase-like oxygenases catalyze the formation of threo diastereomers, however VioC produces the erythro diastereomer of beta-carbon-hydroxylated L-arginine. It exerts a broad substrate specificity by accepting the analogs L-homoarginine and L-canavanine for the beta-carbon hydroxylation. This is Alpha-ketoglutarate-dependent L-arginine hydroxylase (vioC) from Streptomyces vinaceus.